We begin with the raw amino-acid sequence, 700 residues long: Calpain-2 catalytic subunit (700 aa).

Residue Ala-2 is modified to N-acetylalanine. The propeptide at 2 to 19 (AGIAAKLAKDREAAEGLG) is anchors to the small subunit. A Calpain catalytic domain is found at 45–344 (LFQDPSFPAI…YSRLEICNLT (300 aa)). Ca(2+) contacts are provided by Ile-89, Gly-91, and Asp-96. The active site involves Cys-105. Ca(2+) contacts are provided by Glu-175, Gln-229, and Lys-230. Residues His-262 and Asn-286 contribute to the active site. Glu-292, Asp-299, and Glu-323 together coordinate Ca(2+). The domain III stretch occupies residues 345-514 (PDTLTSDTYK…KKADYQAVDD (170 aa)). The tract at residues 515-529 (EIEANLEEFDISEDD) is linker. The segment at 530-700 (IDDGFRRLFA…LISWLCFSVL (171 aa)) is domain IV. Ala-542, Asp-545, Glu-547, Glu-552, Asp-585, Asp-587, Ser-589, Lys-591, Glu-596, Asp-615, Asp-617, Ser-619, Thr-621, Glu-626, Asp-658, and Asn-661 together coordinate Ca(2+). EF-hand domains lie at 572–605 (FSIE…TKIQ) and 602–637 (TKIQ…AGFK). In terms of domain architecture, EF-hand 3 spans 667-700 (VRLETLFKIFKQLDPENTGTIELDLISWLCFSVL).

Belongs to the peptidase C2 family. Forms a heterodimer with a small (regulatory) subunit (CAPNS1). Interacts with CPEB3; this leads to cleavage of CPEB3. Interacts with PIDD1 alternative open reading frame protein altPIDD1. Ca(2+) is required as a cofactor. In terms of tissue distribution, ubiquitous.

The protein resides in the cytoplasm. It localises to the cell membrane. It carries out the reaction Broad endopeptidase specificity.. Activated by 200-1000 micromolar concentrations of calcium and inhibited by calpastatin. Functionally, calcium-regulated non-lysosomal thiol-protease which catalyzes limited proteolysis of substrates involved in cytoskeletal remodeling and signal transduction. Proteolytically cleaves MYOC at 'Arg-226'. Proteolytically cleaves CPEB3 following neuronal stimulation which abolishes CPEB3 translational repressor activity, leading to translation of CPEB3 target mRNAs. The sequence is that of Calpain-2 catalytic subunit (CAPN2) from Homo sapiens (Human).